The primary structure comprises 688 residues: Glycine--tRNA ligase beta subunit (688 aa).

It belongs to the class-II aminoacyl-tRNA synthetase family. In terms of assembly, tetramer of two alpha and two beta subunits.

The protein resides in the cytoplasm. The catalysed reaction is tRNA(Gly) + glycine + ATP = glycyl-tRNA(Gly) + AMP + diphosphate. The protein is Glycine--tRNA ligase beta subunit of Psychromonas ingrahamii (strain DSM 17664 / CCUG 51855 / 37).